The primary structure comprises 1887 residues: MVVASEIAKVASKTARDIAGCFTCQCGTQFDNVERIVQHFKECRYRDETCKDDDIVVYEPSSFVQDEKKDKPIIVEAASEATSEEACNSSKERQLPALSALSALSTLTTSANDDLWTARLIWQSTNDTKLDNSPSSNYTDLNHKLANYGLSILSIHALMCVECECLLNVIHTAQHMQIVHKLELNEDLLWFQELRTLKLKSPTNVLQTHSSQTHVYPYIRGLPVLLNGYECVPCTKNGTGFVHAIMDTFRHHVRRTHGKVIKLENCIRRTALQTVKNKYAQRCQFFKVDYVPLNGGEEEEEEEGEEKEDAQNIKERMVDFCFSKFMEKNQQRREQQDKGENKKRQDDVDQATDNNTNTILEDDEKDNDEEEEEEIVNAREKNLLNQQFNWTAIVKKLGENWDQLVRFEYTNGIVTLDTIVNQLIRYYYRGFRHLSGMTMGMRRMFTQGGSYSAQERGLCRLEQKDTVVRYAQSAALYLIFLLRRPSADSGIRRHLEAMCGATVERKEGGSNSSSNISNVANFDSAEDDNDNDNDNDRDSNNNNNNNNTNTDDDDKLAYLELHEALKLAFLQQYDFSKNVQDLEIMEFLACMSLHKDGTSKYAYEISACFAPLIYTCRLVAACELQRLIDEKQIDLLSIPSFQTAGSIAYAHVFCFITLGQRNLYDVLYETQKVVRDIIRTEGYANTLQGLSPSTVLFQPRSNSMYPCIGDAFNNMVRLDLSELTALYEGMFAKVQDLLKELCFDMNVEKLLPISLLRSIGDDINNSKLGYSFFKESIEIRSSHSVLLRTILKNSELCHRFFPSMSKKDLTKLFGGVSDQQRNECDNYSNHYNDNSNDNDNDVFLKLHWSKSAIKKYETKASIFNELLFCLVYISAGQPARAQEMVYWTLRNGKYKTRELYLMFGRLMIYSRYDKTRNMKFAEKPIPRFLSEPLSILALRYYVLVRPLEALMKYVTTADRSKVAVYLDFMFVIAGERLQRDLPYRIFPKATYQCIQKPLGFRNYRHIAHYFKEKNIEEEMTRESYFDLQAGHTRNTALYIYGRTMDNLHYLPSDYFANFFRASYKWQELLQIRDNPTHGLLVETKHPFIKRVDQLEEALNEKLARLVGEQMVEGDKEKDKTNEEKNKDEVKAEMTQPVVNQDSHDLQDQLATTPTAPTAFHYRPGLLQPSQTSVQHCCWALSQYYGLEAKFRSLKQFQSVYFSLLNRMNLITVLPTGGGKSLSFLIPALIEKKRQTPGKVMNMVTLVLVPMMSLRQDMMLRVNEKGLLVCSGNWTAFKDVRLTLETQLPDLFILTYESALTNSGLRFFESLATLGRLARVVIDEAHLLLTSGAWRTALSRASRLSGLYAPLHLLSATFPRQLEMVARQTFCTNFYVLRETSTARENIFYFLHPYDNTEFLLDLRTLMKRTKVFEGDGRAIIFCRTKKDVEYIHRRLHQSDLFAHTHVTIYTGDVSDEERQMNFDAFRNANGKTRIMIATKAFGLGINYMGVRLVVHYGLPASSMDYVQETGRAGRDGKYAIAALFYEKYDSTWSSYVEDSMKNFLNDNTMCVRSFLASEMDGECVCCASFANCVYCSRCSDSLLGEESTVSTMYGVKPTLPETPKPAIATHSRYNASFSSSPPPQPGNSSGMSAMNTNTTSTTPVSLSELSEITLFPSSVSPTWKKSFGNANTNLKYGLEDMSLSHRRGHKRTYDEHLNNVQQGVNHDMNRVHGSVGGMSGIVGIGIGIGDGDGDGDVDSRTIHFAEYKSRVQAVKKQWVDSTDISAQLERFFRVYKDECLSCTLGNPDTEIRAHTGKACPVRLSTCYKCGKADHNLRECKLRIRFQGLCLFCGLTKFEHADSDMAYTSDCRSWARKANLISLVYYAWNNVQYRRTIADKFLQGDVRD.

A compositionally biased stretch (basic and acidic residues) spans 329–347 (NQQRREQQDKGENKKRQDD). 3 disordered regions span residues 329–372 (NQQR…EEEE), 504–552 (ERKE…NTDD), and 1110–1135 (MVEG…EMTQ). 2 stretches are compositionally biased toward acidic residues: residues 360–372 (LEDD…EEEE) and 524–533 (SAEDDNDNDN). Residues 540–549 (NNNNNNNNTN) are compositionally biased toward low complexity. The span at 1112–1131 (EGDKEKDKTNEEKNKDEVKA) shows a compositional bias: basic and acidic residues. One can recognise a Helicase ATP-binding domain in the interval 1200 to 1375 (YFSLLNRMNL…RQTFCTNFYV (176 aa)). ATP-binding positions include 1213–1220 (LPTGGGKS) and 1240–1247 (MNMVTLVL). Residues 1322–1325 (DEAH) carry the DEAH box motif. The region spanning 1401–1559 (DLRTLMKRTK…CVRSFLASEM (159 aa)) is the Helicase C-terminal domain. The tract at residues 1613-1643 (YNASFSSSPPPQPGNSSGMSAMNTNTTSTTP) is disordered. Residues 1626-1642 (GNSSGMSAMNTNTTSTT) show a composition bias toward low complexity. The CCHC-type zinc finger occupies 1804 to 1821 (STCYKCGKADHNLRECKL).

It belongs to the helicase family. RecQ subfamily.

It catalyses the reaction Couples ATP hydrolysis with the unwinding of duplex DNA by translocating in the 3'-5' direction.. The catalysed reaction is ATP + H2O = ADP + phosphate + H(+). Its function is as follows. A probable ATP-dependent 3'-5' DNA helicase. Has a role in telomerase-independent telomere maintenance. This is ATP-dependent DNA helicase tlh1 from Schizosaccharomyces pombe (strain 972 / ATCC 24843) (Fission yeast).